The following is a 326-amino-acid chain: tRNA-cytidine(32) 2-sulfurtransferase (326 aa).

The PP-loop motif motif lies at 63 to 68; sequence SGGKDS. Cys-138, Cys-141, and Cys-229 together coordinate [4Fe-4S] cluster.

It belongs to the TtcA family. Homodimer. It depends on Mg(2+) as a cofactor. Requires [4Fe-4S] cluster as cofactor.

The protein resides in the cytoplasm. The catalysed reaction is cytidine(32) in tRNA + S-sulfanyl-L-cysteinyl-[cysteine desulfurase] + AH2 + ATP = 2-thiocytidine(32) in tRNA + L-cysteinyl-[cysteine desulfurase] + A + AMP + diphosphate + H(+). The protein operates within tRNA modification. Catalyzes the ATP-dependent 2-thiolation of cytidine in position 32 of tRNA, to form 2-thiocytidine (s(2)C32). The sulfur atoms are provided by the cysteine/cysteine desulfurase (IscS) system. This chain is tRNA-cytidine(32) 2-sulfurtransferase, found in Leptothrix cholodnii (strain ATCC 51168 / LMG 8142 / SP-6) (Leptothrix discophora (strain SP-6)).